Here is a 316-residue protein sequence, read N- to C-terminus: Ribosomal RNA small subunit methyltransferase H (316 aa).

S-adenosyl-L-methionine is bound by residues 35 to 37 (GGH), Asp55, Phe79, Asp101, and Gln108.

The protein belongs to the methyltransferase superfamily. RsmH family.

The protein localises to the cytoplasm. It catalyses the reaction cytidine(1402) in 16S rRNA + S-adenosyl-L-methionine = N(4)-methylcytidine(1402) in 16S rRNA + S-adenosyl-L-homocysteine + H(+). Specifically methylates the N4 position of cytidine in position 1402 (C1402) of 16S rRNA. The protein is Ribosomal RNA small subunit methyltransferase H of Vibrio vulnificus (strain CMCP6).